The following is a 3184-amino-acid chain: Cilia and flagella-associated protein 47 (3184 aa).

A Calponin-homology (CH) domain is found at 1729–1851 (SDSERILLSW…LCVYLYERLP (123 aa)). The tract at residues 2491 to 2514 (RDEEESQEETDTEKDFSSQETPSD) is disordered. A compositionally biased stretch (acidic residues) spans 2493–2502 (EEESQEETDT).

In terms of assembly, interacts with CFAP65. As to expression, highly expressed in spermatzoa (at protein level).

The protein resides in the cytoplasm. Its subcellular location is the cytoskeleton. It is found in the flagellum basal body. In terms of biological role, plays a role in flagellar formation and sperm motility. This Mus musculus (Mouse) protein is Cilia and flagella-associated protein 47.